Here is a 281-residue protein sequence, read N- to C-terminus: Pantothenate synthetase (281 aa).

Residue 30–37 (MGNLHQGH) coordinates ATP. H37 functions as the Proton donor in the catalytic mechanism. Q61 serves as a coordination point for (R)-pantoate. Q61 provides a ligand contact to beta-alanine. 149–152 (GNKD) contributes to the ATP binding site. Q155 serves as a coordination point for (R)-pantoate. ATP-binding positions include I178 and 186–189 (MSSR).

This sequence belongs to the pantothenate synthetase family. As to quaternary structure, homodimer.

It is found in the cytoplasm. The enzyme catalyses (R)-pantoate + beta-alanine + ATP = (R)-pantothenate + AMP + diphosphate + H(+). It functions in the pathway cofactor biosynthesis; (R)-pantothenate biosynthesis; (R)-pantothenate from (R)-pantoate and beta-alanine: step 1/1. In terms of biological role, catalyzes the condensation of pantoate with beta-alanine in an ATP-dependent reaction via a pantoyl-adenylate intermediate. This Shewanella baltica (strain OS223) protein is Pantothenate synthetase.